The sequence spans 66 residues: LAEQAERYEEMVEYMEKNLLSVAYKIISSIEQKEESRQAFDEAIAELDTLGEESYKDSTLIMQLLR.

This sequence belongs to the 14-3-3 family.

This chain is 14-3-3-like protein 2, found in Pseudotsuga menziesii (Douglas-fir).